A 269-amino-acid polypeptide reads, in one-letter code: NAD kinase (269 aa).

Residue Asp-45 is the Proton acceptor of the active site. NAD(+) is bound by residues 45 to 46 (DG), 122 to 123 (NE), Arg-149, Asp-151, and Ala-186.

It belongs to the NAD kinase family. Requires a divalent metal cation as cofactor.

It localises to the cytoplasm. The catalysed reaction is NAD(+) + ATP = ADP + NADP(+) + H(+). Its function is as follows. Involved in the regulation of the intracellular balance of NAD and NADP, and is a key enzyme in the biosynthesis of NADP. Catalyzes specifically the phosphorylation on 2'-hydroxyl of the adenosine moiety of NAD to yield NADP. This chain is NAD kinase, found in Staphylococcus saprophyticus subsp. saprophyticus (strain ATCC 15305 / DSM 20229 / NCIMB 8711 / NCTC 7292 / S-41).